The sequence spans 211 residues: Orotate phosphoribosyltransferase (211 aa).

Residue K26 coordinates 5-phospho-alpha-D-ribose 1-diphosphate. An orotate-binding site is contributed by 34-35 (FF). 5-phospho-alpha-D-ribose 1-diphosphate is bound by residues 72–73 (YK), R98, K99, K102, H104, and 123–131 (DDVITAGTA). Orotate contacts are provided by T127 and R155.

Belongs to the purine/pyrimidine phosphoribosyltransferase family. PyrE subfamily. As to quaternary structure, homodimer. The cofactor is Mg(2+).

It carries out the reaction orotidine 5'-phosphate + diphosphate = orotate + 5-phospho-alpha-D-ribose 1-diphosphate. It participates in pyrimidine metabolism; UMP biosynthesis via de novo pathway; UMP from orotate: step 1/2. Its function is as follows. Catalyzes the transfer of a ribosyl phosphate group from 5-phosphoribose 1-diphosphate to orotate, leading to the formation of orotidine monophosphate (OMP). This chain is Orotate phosphoribosyltransferase, found in Legionella pneumophila (strain Lens).